The following is a 132-amino-acid chain: UPF0047 protein YugU (132 aa).

This sequence belongs to the UPF0047 family.

The chain is UPF0047 protein YugU (yugU) from Bacillus subtilis (strain 168).